We begin with the raw amino-acid sequence, 186 residues long: Tegument protein UL55 (186 aa).

It belongs to the alphaherpesvirinae HHV-1 UL55 family.

It is found in the virion tegument. Its subcellular location is the host nucleus matrix. This is Tegument protein UL55 from Human herpesvirus 2 (strain HG52) (HHV-2).